The sequence spans 200 residues: MVVNILLFITLIFLLLLFVFLIAFAFLNKRVRNYVVRTWTSVFSKSKQNLDKKNFFDNLTSTLLRLSVDKIGAIIAIEKRDSLDPYINIGYRVSSDFSPELLVTIFYNKSSPLHDGAVIVRDYKIISVSSYFPMTRQLIDVSYGSRHRSALGLSEKSDAVVFIVSETTGKISVALKGVIKTLSSNSDRLQDEIIHYLSSK.

Residues 5–25 (ILLFITLIFLLLLFVFLIAFA) form a helical membrane-spanning segment. Positions 28–185 (NKRVRNYVVR…KGVIKTLSSN (158 aa)) constitute a DAC domain.

It belongs to the adenylate cyclase family. DacB/CdaS subfamily. Probably oligomerizes.

The protein localises to the cell membrane. The catalysed reaction is 2 ATP = 3',3'-c-di-AMP + 2 diphosphate. In terms of biological role, catalyzes the condensation of 2 ATP molecules into cyclic di-AMP (c-di-AMP), a second messenger used to regulate differing processes in different bacteria. This Mycoplasma genitalium (strain ATCC 33530 / DSM 19775 / NCTC 10195 / G37) (Mycoplasmoides genitalium) protein is Diadenylate cyclase.